The sequence spans 280 residues: Dermonecrotic toxin LgSicTox-alphaIC1 (280 aa).

Histidine 12 is an active-site residue. Residues glutamate 32 and aspartate 34 each coordinate Mg(2+). Histidine 48 (nucleophile) is an active-site residue. Disulfide bonds link cysteine 52/cysteine 58 and cysteine 54/cysteine 197. Aspartate 92 contacts Mg(2+).

This sequence belongs to the arthropod phospholipase D family. Class II subfamily. It depends on Mg(2+) as a cofactor. Expressed by the venom gland.

Its subcellular location is the secreted. The enzyme catalyses an N-(acyl)-sphingosylphosphocholine = an N-(acyl)-sphingosyl-1,3-cyclic phosphate + choline. The catalysed reaction is an N-(acyl)-sphingosylphosphoethanolamine = an N-(acyl)-sphingosyl-1,3-cyclic phosphate + ethanolamine. It carries out the reaction a 1-acyl-sn-glycero-3-phosphocholine = a 1-acyl-sn-glycero-2,3-cyclic phosphate + choline. It catalyses the reaction a 1-acyl-sn-glycero-3-phosphoethanolamine = a 1-acyl-sn-glycero-2,3-cyclic phosphate + ethanolamine. Its function is as follows. Dermonecrotic toxins cleave the phosphodiester linkage between the phosphate and headgroup of certain phospholipids (sphingolipid and lysolipid substrates), forming an alcohol (often choline) and a cyclic phosphate. This toxin acts on sphingomyelin (SM) with high activity. It may also act on ceramide phosphoethanolamine (CPE), lysophosphatidylcholine (LPC) and lysophosphatidylethanolamine (LPE), but not on lysophosphatidylserine (LPS), and lysophosphatidylglycerol (LPG). It acts by transphosphatidylation, releasing exclusively cyclic phosphate products as second products. Induces platelet aggregation in platelet rich plasma, but not in washed platelet, indicating that this activity is dependent on plasma components. Also induces hemolysis. In vivo, the recombinant protein evokes an intense inflammatory reaction and dermonecrosis, similar to those induced by L.gaucho total venom. Is a good immunogen, capable of inducing immunoprotection in test animals. In terms of biological role, anionic antimicrobial peptide that shows antimicrobial activity against Gram-negative bacteria (MIC=1.15-4.6 uM) (tested on E.coli, P.aeruginosa, and E.cloacae), but not on Gram-negative bacteria (M.luteus, S.aureus, and B.subtilis), neither on fungi and yeasts (A.niger, C.albicans and C.krusei). Does not show hemolytic effects against human erythrocytes, and has no cytotoxic effects against human cervical carcinoma cells (HeLa). The sequence is that of Dermonecrotic toxin LgSicTox-alphaIC1 from Loxosceles gaucho (Spider).